Here is a 449-residue protein sequence, read N- to C-terminus: Tubulin alpha-8 chain (449 aa).

The short motif at 1–4 (MREC) is the MREC motif element. Positions 11, 71, 140, 144, 145, 179, 206, and 228 each coordinate GTP. Mg(2+) is bound at residue E71. E254 is an active-site residue.

It belongs to the tubulin family. In terms of assembly, dimer of alpha and beta chains. A typical microtubule is a hollow water-filled tube with an outer diameter of 25 nm and an inner diameter of 15 nM. Alpha-beta heterodimers associate head-to-tail to form protofilaments running lengthwise along the microtubule wall with the beta-tubulin subunit facing the microtubule plus end conferring a structural polarity. Microtubules usually have 13 protofilaments but different protofilament numbers can be found in some organisms and specialized cells. It depends on Mg(2+) as a cofactor. Some glutamate residues at the C-terminus are polyglycylated, resulting in polyglycine chains on the gamma-carboxyl group. Glycylation is mainly limited to tubulin incorporated into axonemes (cilia and flagella) whereas glutamylation is prevalent in neuronal cells, centrioles, axonemes, and the mitotic spindle. Both modifications can coexist on the same protein on adjacent residues, and lowering polyglycylation levels increases polyglutamylation, and reciprocally. Cilia and flagella glycylation is required for their stability and maintenance. Flagella glycylation controls sperm motility. Post-translationally, some glutamate residues at the C-terminus are polyglutamylated, resulting in polyglutamate chains on the gamma-carboxyl group. Polyglutamylation plays a key role in microtubule severing by spastin (SPAST). SPAST preferentially recognizes and acts on microtubules decorated with short polyglutamate tails: severing activity by SPAST increases as the number of glutamates per tubulin rises from one to eight, but decreases beyond this glutamylation threshold. Glutamylation is also involved in cilia motility. In terms of processing, the C-terminal phenylalanine residue is cleaved by MATCAP1/KIAA0895L. As to expression, expressed at highest levels in the testis, followed by skeletal and heart muscle. Expressed at low levels in the developing brain.

It is found in the cytoplasm. The protein localises to the cytoskeleton. It catalyses the reaction GTP + H2O = GDP + phosphate + H(+). Tubulin is the major constituent of microtubules, a cylinder consisting of laterally associated linear protofilaments composed of alpha- and beta-tubulin heterodimers. Microtubules grow by the addition of GTP-tubulin dimers to the microtubule end, where a stabilizing cap forms. Below the cap, tubulin dimers are in GDP-bound state, owing to GTPase activity of alpha-tubulin. The polypeptide is Tubulin alpha-8 chain (Tuba8) (Mus musculus (Mouse)).